Here is a 100-residue protein sequence, read N- to C-terminus: Putative antiporter subunit mnhF2 (100 aa).

A run of 3 helical transmembrane segments spans residues 5-25, 38-60, and 70-92; these read ITHI…IICL, VVTF…VLMG, and LIAI…GHVF.

It belongs to the CPA3 antiporters (TC 2.A.63) subunit F family. As to quaternary structure, may form a heterooligomeric complex that consists of seven subunits: mnhA2, mnhB2, mnhC2, mnhD2, mnhE2, mnhF2 and mnhG2.

It is found in the cell membrane. The sequence is that of Putative antiporter subunit mnhF2 (mnhF2) from Staphylococcus aureus (strain USA300).